A 559-amino-acid polypeptide reads, in one-letter code: Serine/threonine-protein kinase bur1 (559 aa).

The region spanning 40–341 (YEVLGKLGEG…AIDALNHPYF (302 aa)) is the Protein kinase domain. ATP is bound by residues 46–54 (LGEGTFGEV) and K69. The active-site Proton acceptor is D171. Residues 359–372 (SHEFDRRKFQDRKA) are compositionally biased toward basic and acidic residues. Positions 359 to 559 (SHEFDRRKFQ…GRDRDAYARR (201 aa)) are disordered. A compositionally biased stretch (gly residues) spans 400 to 414 (GRDGYGGGGRNGANG). 3 stretches are compositionally biased toward basic and acidic residues: residues 457-467 (DHTDGYRDRPP), 491-534 (YDRD…DSRT), and 543-559 (PVRD…YARR).

It belongs to the protein kinase superfamily. CMGC Ser/Thr protein kinase family. CDC2/CDKX subfamily.

The protein resides in the nucleus. It catalyses the reaction L-seryl-[protein] + ATP = O-phospho-L-seryl-[protein] + ADP + H(+). The enzyme catalyses L-threonyl-[protein] + ATP = O-phospho-L-threonyl-[protein] + ADP + H(+). It carries out the reaction [DNA-directed RNA polymerase] + ATP = phospho-[DNA-directed RNA polymerase] + ADP + H(+). Serine/threonine-protein kinase involved in transcription regulation. Phosphorylates the mus-8/ubc2 ubiquitin-conjugating enzyme (E2), leading to monoubiquitination of histone H2B and the silencing of telomeric-associated genes. Also required for histone H3 methylation. Necessary for the recovery from pheromone-induced growth arrest in the cell cycle G1 phase. This chain is Serine/threonine-protein kinase bur1 (stk-1), found in Neurospora crassa (strain ATCC 24698 / 74-OR23-1A / CBS 708.71 / DSM 1257 / FGSC 987).